The sequence spans 233 residues: MAALSPYKADFLKASIDGGVLKFGSFELKSKRISPYFFNAGDFYRADLLQAISTAYAKCIIEAHKSGQLDFDIVFGPAYKGIPLATAATDKLAQLDPETYGKICYSFDRKEAKDHGEGGNIVGAPLKGKRILIVDDVITAGTAKREAIAKIEKEGGIVAGIVVALDRMEKLPAADGDDSKPGPSAMGELRKEYGIPIFAILTLDDIIEGMRGLASPEDVEKTEEYRAKYKATD.

5-phospho-alpha-D-ribose 1-diphosphate is bound at residue Lys29. Residue 37 to 38 coordinates orotate; that stretch reads FF. Residues 79-80, Arg109, Lys110, Lys113, His115, and 135-143 each bind 5-phospho-alpha-D-ribose 1-diphosphate; these read YK and DDVITAGTA. The orotate site is built by Thr139 and Arg167.

The protein belongs to the purine/pyrimidine phosphoribosyltransferase family. PyrE subfamily. Homodimer.

It catalyses the reaction orotidine 5'-phosphate + diphosphate = orotate + 5-phospho-alpha-D-ribose 1-diphosphate. It participates in pyrimidine metabolism; UMP biosynthesis via de novo pathway; UMP from orotate: step 1/2. In terms of biological role, catalyzes the transfer of a ribosyl phosphate group from 5-phosphoribose 1-diphosphate to orotate, leading to the formation of orotidine monophosphate (OMP). In Neurospora crassa (strain ATCC 24698 / 74-OR23-1A / CBS 708.71 / DSM 1257 / FGSC 987), this protein is Orotate phosphoribosyltransferase (ura-5).